The sequence spans 260 residues: Homeobox protein Hox-D11b (260 aa).

Residues methionine 1 to proline 14 show a composition bias toward low complexity. Disordered regions lie at residues methionine 1–alanine 21 and isoleucine 151–arginine 206. Basic and acidic residues predominate over residues arginine 167–glycine 179. Residues arginine 205–threonine 260 constitute a DNA-binding region (homeobox; truncated).

The protein belongs to the Abd-B homeobox family.

Its subcellular location is the nucleus. Sequence-specific transcription factor which is part of a developmental regulatory system that provides cells with specific positional identities on the anterior-posterior axis. The protein is Homeobox protein Hox-D11b (hoxd11b) of Takifugu rubripes (Japanese pufferfish).